A 119-amino-acid chain; its full sequence is U9-hexatoxin-Hi1 (119 aa).

Residues 1 to 17 (MKLYLVILVTSVALAAA) form the signal peptide. Positions 18-53 (SPTRTKEEPIEDELLEALLSVEKSLFNEETTVMEKR) are excised as a propeptide. 4 cysteine pairs are disulfide-bonded: Cys-55-Cys-73, Cys-66-Cys-79, Cys-70-Cys-117, and Cys-72-Cys-88.

Belongs to the neurotoxin 03 (Tx2) family. 03 subfamily. In terms of tissue distribution, expressed by the venom gland.

It is found in the secreted. Its function is as follows. Probable ion channel inhibitor. The protein is U9-hexatoxin-Hi1 of Hadronyche infensa (Fraser island funnel-web spider).